Consider the following 295-residue polypeptide: Glutamyl-Q tRNA(Asp) synthetase (295 aa).

L-glutamate is bound by residues Arg5–Ser9 and Glu41. Positions Pro8–Ser18 match the 'HIGH' region motif. 4 residues coordinate Zn(2+): Cys97, Cys99, Tyr117, and Cys121. L-glutamate is bound by residues Tyr178 and Arg196. The 'KMSKS' region motif lies at Lys234–Gln238. Lys237 provides a ligand contact to ATP.

The protein belongs to the class-I aminoacyl-tRNA synthetase family. GluQ subfamily. Zn(2+) serves as cofactor.

In terms of biological role, catalyzes the tRNA-independent activation of glutamate in presence of ATP and the subsequent transfer of glutamate onto a tRNA(Asp). Glutamate is transferred on the 2-amino-5-(4,5-dihydroxy-2-cyclopenten-1-yl) moiety of the queuosine in the wobble position of the QUC anticodon. The polypeptide is Glutamyl-Q tRNA(Asp) synthetase (Neisseria meningitidis serogroup A / serotype 4A (strain DSM 15465 / Z2491)).